A 240-amino-acid chain; its full sequence is tRNA pseudouridine synthase A (240 aa).

The active-site Nucleophile is the Asp50. Tyr109 is a substrate binding site.

The protein belongs to the tRNA pseudouridine synthase TruA family. In terms of assembly, homodimer.

It carries out the reaction uridine(38/39/40) in tRNA = pseudouridine(38/39/40) in tRNA. Its function is as follows. Formation of pseudouridine at positions 38, 39 and 40 in the anticodon stem and loop of transfer RNAs. This chain is tRNA pseudouridine synthase A, found in Campylobacter jejuni subsp. jejuni serotype O:6 (strain 81116 / NCTC 11828).